A 427-amino-acid polypeptide reads, in one-letter code: MRFDKSKEIFDNTKRYIPGGVNSPVRAFKNLSITPPVISKGKGCRIFDIDGNEYIDFVLSWGAMILGHCDPDVVNSIKEVVEDQIAFGAPTEIEYKMAKLVCETAQVDMVRFVNSGTEATMTAIRLAKGYTGKKKIVKFAGCYHGHHDIFLKEAGSAVAELRLKGIDEDIVQNTIVVEYNNLDSIEKAFKENKDEISAVIIEPVAGNMGVVPAKKEFLQALREICDLHGSLLIFDEVITGFRLSLKGARALYNVEPDLVTFGKIIGGGLPCGAVGGKKEIMQCLAPQGNVFQAGTMSGNPIVMSAGYATIKKLKENPDIYTYLELLAQKLEGNLAKVFSSSNLTFCINRVGSMLTVFFGVEKVENFEMAKKSNLSMFKKFAEYMITNGIYIPSSQFEAMFLSSAHTESDIERFAEVAEGFAKFVKKP.

Lysine 263 is subject to N6-(pyridoxal phosphate)lysine.

This sequence belongs to the class-III pyridoxal-phosphate-dependent aminotransferase family. HemL subfamily. As to quaternary structure, homodimer. The cofactor is pyridoxal 5'-phosphate.

The protein localises to the cytoplasm. The catalysed reaction is (S)-4-amino-5-oxopentanoate = 5-aminolevulinate. It participates in porphyrin-containing compound metabolism; protoporphyrin-IX biosynthesis; 5-aminolevulinate from L-glutamyl-tRNA(Glu): step 2/2. The chain is Glutamate-1-semialdehyde 2,1-aminomutase from Caldicellulosiruptor saccharolyticus (strain ATCC 43494 / DSM 8903 / Tp8T 6331).